A 132-amino-acid polypeptide reads, in one-letter code: MAPAKEIWAVGRRKTSVARAKIKEGSGKITVNHKDIKDYLQNRKAIIEEAIRPLSLLNVQDKYDLNLNVTGGGTTGQVGAIRHALARAICRIKPEFRPAVKKEGFLTRDPRMVERKKYGLHKARRGTQFSKR.

The protein belongs to the universal ribosomal protein uS9 family.

This is Small ribosomal subunit protein uS9 from Leptospira interrogans serogroup Icterohaemorrhagiae serovar copenhageni (strain Fiocruz L1-130).